The primary structure comprises 224 residues: Retinoschisin (224 aa).

The signal sequence occupies residues 1–23 (MSRKIEGFLLLLLFGYEATLGLS). Residues 63-219 (CPYHKPLGFE…IAIRMELLEC (157 aa)) form the F5/8 type C domain. 2 disulfides stabilise this stretch: Cys63–Cys219 and Cys110–Cys142.

In terms of assembly, homooctamer of 4 homodimers; disulfide-linked. The homooctamer has a flat, cogwheel structure with a diameter of about 14 nm. Two stacked octamers can assemble to form a hexadecamer. As to expression, restricted to the retina (at protein level). Detected in the inner segment of the photoreceptors, the inner nuclear layer, the inner plexiform layer and the ganglion cell layer (at protein level). At the macula, expressed in both the outer and inner nuclear layers and in the inner plexiform layer (at protein level). Detected in retina. Detected only within the photoreceptor cell layer, most prominently within the inner segments of the photoreceptors. Undetectable in the inner plexiform layers and the inner nuclear layer.

The protein resides in the secreted. Its subcellular location is the cell membrane. Its function is as follows. Binds negatively charged membrane lipids, such as phosphatidylserine and phosphoinositides. May play a role in cell-cell adhesion processes in the retina, via homomeric interaction between octamers present on the surface of two neighboring cells. Required for normal structure and function of the retina. The sequence is that of Retinoschisin (RS1) from Homo sapiens (Human).